Reading from the N-terminus, the 59-residue chain is KVHGSLARAGKVRGQTPKVAKQEKKKKKTGRAKRRMQYNRRFVNVVPTFGKKKGPNANS.

The interval 1–35 (KVHGSLARAGKVRGQTPKVAKQEKKKKKTGRAKRR) is disordered. Residues 23–35 (EKKKKKTGRAKRR) show a composition bias toward basic residues. Residue K51 is modified to N6-succinyllysine.

Belongs to the eukaryotic ribosomal protein eS30 family.

The chain is Small ribosomal subunit protein eS30 (Fau) from Mus spicilegus (Steppe mouse).